The chain runs to 379 residues: MNAVTYEHIKTCKQSGARLGIVHTPHGSFETPMFMPVGTQATVKTMSPEELKAMNAKIILSNTYHLWLRPGNDVIREAGGLHKFMNWDGPILTDSGGFQVFSLSDMRKIEEEGVHFRHHLNGSKLFLSPHKAMHIQNDLGSDIMMAFDECPPMPATYEYVKASIERTSRWAERCLEAHQRPEDQALFGIIQGGEYEDLRTQSAKDLVSMDFPGYAIGGLSVGEPKPIMYRMLEHTTPLMPFNKPRYLMGVGSPDALIEGAIRGIDMFDCVLPTRIARNGTCMTSKGRVVVKNAKYERDFTPLDEKCECYTCKNYTKAYLRHLIKADETFGIRLTTIHNLHFLLNLMEQVREAIRNDRLLDFKEEFFEEYGLNVENPKNF.

Residue aspartate 94 is the Proton acceptor of the active site. Substrate is bound by residues 94 to 98, aspartate 148, glutamine 191, and glycine 218; that span reads DSGGF. Residues 249-255 form an RNA binding region; that stretch reads GVGSPDA. Aspartate 268 serves as the catalytic Nucleophile. The segment at 273–277 is RNA binding; important for wobble base 34 recognition; sequence TRIAR. Zn(2+)-binding residues include cysteine 306, cysteine 308, cysteine 311, and histidine 337.

This sequence belongs to the queuine tRNA-ribosyltransferase family. As to quaternary structure, homodimer. Within each dimer, one monomer is responsible for RNA recognition and catalysis, while the other monomer binds to the replacement base PreQ1. The cofactor is Zn(2+).

It carries out the reaction 7-aminomethyl-7-carbaguanine + guanosine(34) in tRNA = 7-aminomethyl-7-carbaguanosine(34) in tRNA + guanine. The protein operates within tRNA modification; tRNA-queuosine biosynthesis. Its function is as follows. Catalyzes the base-exchange of a guanine (G) residue with the queuine precursor 7-aminomethyl-7-deazaguanine (PreQ1) at position 34 (anticodon wobble position) in tRNAs with GU(N) anticodons (tRNA-Asp, -Asn, -His and -Tyr). Catalysis occurs through a double-displacement mechanism. The nucleophile active site attacks the C1' of nucleotide 34 to detach the guanine base from the RNA, forming a covalent enzyme-RNA intermediate. The proton acceptor active site deprotonates the incoming PreQ1, allowing a nucleophilic attack on the C1' of the ribose to form the product. After dissociation, two additional enzymatic reactions on the tRNA convert PreQ1 to queuine (Q), resulting in the hypermodified nucleoside queuosine (7-(((4,5-cis-dihydroxy-2-cyclopenten-1-yl)amino)methyl)-7-deazaguanosine). This Macrococcus caseolyticus (strain JCSC5402) (Macrococcoides caseolyticum) protein is Queuine tRNA-ribosyltransferase.